A 336-amino-acid polypeptide reads, in one-letter code: Ankyrin repeat and SOCS box protein 1 (336 aa).

6 ANK repeats span residues 37-69 (CDDT…RINE), 78-107 (LPCT…EVDL), 111-140 (KGQT…DPNG), 144-173 (HRST…DVDV), 192-221 (LVVC…NPDF), and 236-266 (SPGC…NLNL). Residues 287-336 (LQVFKEARSIPRTLLSLCRVAVRRALGKYRLHLVPSLPLPDPIKKFLLYE) enclose the SOCS box domain.

This sequence belongs to the ankyrin SOCS box (ASB) family. As to quaternary structure, interacts with CUL5 and RNF7. As to expression, highest expression in testis, spleen, bone marrow and salivary gland.

The protein operates within protein modification; protein ubiquitination. In terms of biological role, probable substrate-recognition component of a SCF-like ECS (Elongin-Cullin-SOCS-box protein) E3 ligase complex which mediates the ubiquitination and subsequent proteasomal degradation of target proteins. Mediates Notch-induced ubiquitination and degradation of TCF3/E2A and JAK2. May play a role in testis development. The sequence is that of Ankyrin repeat and SOCS box protein 1 (Asb1) from Mus musculus (Mouse).